The following is a 447-amino-acid chain: Coagulation factor VII (447 aa).

Residues 1–23 form the signal peptide; it reads MLSQAWALALLCFLLSLWGSLPA. The propeptide occupies 24–40; that stretch reads VFLPQEQALSILHRPRR. Positions 41-85 constitute a Gla domain; sequence ANGFLEELLPGSLERECREELCSFEEAHEIFRNEERTRQFWVSYN. 4-carboxyglutamate occurs at positions 46, 47, 54, 56, 59, 60, 65, 66, 69, 74, and 75. A disulfide bridge connects residues Cys-57 and Cys-62. The EGF-like 1; calcium-binding domain occupies 86–122; the sequence is DGDQCASSPCQNGGSCEDQLRSYICFCPDGFEGRNCE. Cystine bridges form between Cys-90/Cys-101, Cys-95/Cys-110, Cys-112/Cys-121, Cys-131/Cys-142, Cys-138/Cys-152, Cys-154/Cys-167, Cys-175/Cys-302, Cys-199/Cys-204, Cys-218/Cys-234, and Cys-350/Cys-369. The O-linked (Glc...) serine glycan is linked to Ser-92. An O-linked (Glc...) serine; alternate glycan is attached at Ser-92. The O-linked (Xyl...) serine; alternate glycan is linked to Ser-92. O-linked (Fuc) serine glycosylation occurs at Ser-100. Residues 127 to 168 enclose the EGF-like 2 domain; that stretch reads SQLICANDNGGCEQYCGADPGAGRFCWCHEGYALQADGVSCA. Asn-185 carries an N-linked (GlcNAc...) asparagine glycan. Residues 193-432 enclose the Peptidase S1 domain; that stretch reads IVGGHVCPKG…YTAWLRQLMG (240 aa). His-233 functions as the Charge relay system in the catalytic mechanism. Asn-243 is a glycosylation site (N-linked (GlcNAc...) asparagine). Residue Asp-282 is the Charge relay system of the active site. Substrate is bound at residue Asp-378. A disulfide bridge connects residues Cys-380 and Cys-408. Ser-384 functions as the Charge relay system in the catalytic mechanism.

The protein belongs to the peptidase S1 family. As to quaternary structure, heterodimer of a light chain and a heavy chain linked by a disulfide bond. Post-translationally, the vitamin K-dependent, enzymatic carboxylation of some glutamate residues allows the modified protein to bind calcium. In terms of processing, O-glycosylated. O-fucosylated by POFUT1 on a conserved serine or threonine residue found in the consensus sequence C2-X(4,5)-[S/T]-C3 of EGF domains, where C2 and C3 are the second and third conserved cysteines. Can be either O-glucosylated or O-xylosylated at Ser-92 by POGLUT1. Plasma.

The protein localises to the secreted. It catalyses the reaction Selective cleavage of Arg-|-Ile bond in factor X to form factor Xa.. Functionally, initiates the extrinsic pathway of blood coagulation. Serine protease that circulates in the blood in a zymogen form. Factor VII is converted to factor VIIa by factor Xa, factor XIIa, factor IXa, or thrombin by minor proteolysis. In the presence of tissue factor and calcium ions, factor VIIa then converts factor X to factor Xa by limited proteolysis. Factor VIIa also converts factor IX to factor IXa in the presence of tissue factor and calcium. This Bos taurus (Bovine) protein is Coagulation factor VII (F7).